The sequence spans 577 residues: Arginine--tRNA ligase (577 aa).

Positions 122–132 (PNVAKEMHVGH) match the 'HIGH' region motif.

This sequence belongs to the class-I aminoacyl-tRNA synthetase family. In terms of assembly, monomer.

The protein resides in the cytoplasm. The enzyme catalyses tRNA(Arg) + L-arginine + ATP = L-arginyl-tRNA(Arg) + AMP + diphosphate. The protein is Arginine--tRNA ligase of Salmonella schwarzengrund (strain CVM19633).